Here is a 1441-residue protein sequence, read N- to C-terminus: ABC transporter G family member 51 (1441 aa).

Residues 52–71 (VLPDPDGLGGGDGGGRGEGQ) form a disordered region. Over residues 58 to 69 (GLGGGDGGGRGE) the composition is skewed to gly residues. An ABC transporter 1 domain is found at 154 to 428 (LISSHLLRPD…FKSLGFSLPP (275 aa)). Position 187-194 (187-194 (GPPASGKS)) interacts with ATP. The ABC transmembrane type-2 1 domain occupies 505–718 (SLVRACFARE…AQRAVSVNEF (214 aa)). The next 6 helical transmembrane spans lie at 523-543 (FLYT…STLF), 558-578 (LYLA…FTEM), 615-635 (FIEA…APTV), 642-662 (MLLL…MGAI), 668-688 (IAST…GFVV), and 751-771 (FWIG…MFTL). An ABC transporter 2 domain is found at 838 to 1090 (MTFHNVNYYV…DMINYFQGIP (253 aa)). 883-890 (GASGSGKT) provides a ligand contact to ATP. In terms of domain architecture, ABC transmembrane type-2 2 spans 1163-1380 (TQFMVCLRKQ…TLRGVITSQL (218 aa)). A run of 7 helical transmembrane segments spans residues 1184–1204 (VVRL…FWNV), 1214–1234 (ILLL…NNAS), 1271–1291 (VEIP…YFMV), 1300–1320 (LVLY…YGMV), 1330–1350 (MASV…GFLI), 1355–1375 (IPGW…LRGV), and 1413–1433 (ATVA…AISI).

Belongs to the ABC transporter superfamily. ABCG family. PDR (TC 3.A.1.205) subfamily.

It is found in the membrane. Its function is as follows. May be a general defense protein. The sequence is that of ABC transporter G family member 51 from Oryza sativa subsp. japonica (Rice).